Reading from the N-terminus, the 208-residue chain is Glycerol-3-phosphate acyltransferase (208 aa).

5 helical membrane-spanning segments follow: residues isoleucine 3 to glycine 23, isoleucine 55 to phenylalanine 75, tyrosine 81 to phenylalanine 101, isoleucine 113 to valine 133, and isoleucine 155 to phenylalanine 175.

It belongs to the PlsY family. As to quaternary structure, probably interacts with PlsX.

The protein localises to the cell membrane. The catalysed reaction is an acyl phosphate + sn-glycerol 3-phosphate = a 1-acyl-sn-glycero-3-phosphate + phosphate. It functions in the pathway lipid metabolism; phospholipid metabolism. Catalyzes the transfer of an acyl group from acyl-phosphate (acyl-PO(4)) to glycerol-3-phosphate (G3P) to form lysophosphatidic acid (LPA). This enzyme utilizes acyl-phosphate as fatty acyl donor, but not acyl-CoA or acyl-ACP. In Lactiplantibacillus plantarum (strain ATCC BAA-793 / NCIMB 8826 / WCFS1) (Lactobacillus plantarum), this protein is Glycerol-3-phosphate acyltransferase.